The chain runs to 498 residues: Signal recognition particle receptor FtsY (498 aa).

2 disordered regions span residues 1-130 and 147-200; these read MGLF…PNQS and KVES…YNRS. Positions 36–46 are enriched in low complexity; that stretch reads ALLAETAETAE. Polar residues predominate over residues 103–120; the sequence is SENSVAAVQNNTETMPSQ. Residues 301–308, 383–387, and 447–450 each bind GTP; these read GVNGVGKT, DTAGR, and TKID.

The protein belongs to the GTP-binding SRP family. FtsY subfamily. Part of the signal recognition particle protein translocation system, which is composed of SRP and FtsY.

It localises to the cell membrane. It is found in the cytoplasm. The catalysed reaction is GTP + H2O = GDP + phosphate + H(+). Involved in targeting and insertion of nascent membrane proteins into the cytoplasmic membrane. Acts as a receptor for the complex formed by the signal recognition particle (SRP) and the ribosome-nascent chain (RNC). The sequence is that of Signal recognition particle receptor FtsY from Streptococcus mutans serotype c (strain ATCC 700610 / UA159).